The following is a 625-amino-acid chain: MALPTARPLLGSCGSPICSRSFLLLLLSLGWIPRLQTQTTKTSQEATLLHAVNGAADFASLPTGLFLGLTCEEVSDLSMEQAKGLAMAVRQKNITLRGHQLRCLARRLPRHLTDEELNALPLDLLLFLNPAMFPGQQACAHFFSLISKANVDVLPRRSLERQRLLMEALKCQGVYGFQVSEADVRALGGLACDLPGKFVARSSEVLLPWLAGCQGPLDQSQEKAVREVLRSGRTQYGPPSKWSVSTLDALQSLVAVLDESIVQSIPKDVKAEWLQHISRDPSRLGSKLTVIHPRFRRDAEQKACPPGKEPYKVDEDLIFYQNWELEACVDGTMLARQMDLVNEIPFTYEQLSIFKHKLDKTYPQGYPESLIQQLGHFFRYVSPEDIHQWNVTSPDTVKTLLKVSKGQKMNAQAIALVACYLRGGGQLDEDMVKALGDIPLSYLCDFSPQDLHSVPSSVMWLVGPQDLDKCSQRHLGLLYQKACSAFQNVSGLEYFEKIKTFLGGASVKDLRALSQHNVSMDIATFKRLQVDSLVGLSVAEVQKLLGPNIVDLKTEEDKSPVRDWLFRQHQKDLDRLGLGLQGGIPNGYLVLDFNVREAFSSRASLLGPGFVLIWIPALLPALRLS.

Positions 1–35 (MALPTARPLLGSCGSPICSRSFLLLLLSLGWIPRL) are cleaved as a signal peptide. An N-linked (GlcNAc...) asparagine glycan is attached at Asn93. Ser202 is subject to Phosphoserine. The cysteines at positions 304 and 328 are disulfide-linked. Residues Asn390, Asn488, and Asn517 are each glycosylated (N-linked (GlcNAc...) asparagine). The GPI-anchor amidated serine moiety is linked to residue Ser600. Positions 601-625 (SRASLLGPGFVLIWIPALLPALRLS) are cleaved as a propeptide — removed in mature form.

It belongs to the mesothelin family. As to quaternary structure, interacts with MUC16. Proteolytically cleaved by a furin-like convertase to generate megakaryocyte-potentiating factor (MPF), and the cleaved form of mesothelin. In terms of tissue distribution, highly expressed in lung and heart. Expressed at low levels in spleen, liver, kidney and testis. Present in lung (at protein level).

The protein resides in the cell membrane. It is found in the golgi apparatus. Its subcellular location is the secreted. Membrane-anchored forms may play a role in cellular adhesion. Functionally, megakaryocyte-potentiating factor (MPF) may potentiate megakaryocyte colony formation. This chain is Mesothelin (Msln), found in Mus musculus (Mouse).